Consider the following 92-residue polypeptide: Small ribosomal subunit protein uS19 (92 aa).

Belongs to the universal ribosomal protein uS19 family.

In terms of biological role, protein S19 forms a complex with S13 that binds strongly to the 16S ribosomal RNA. The polypeptide is Small ribosomal subunit protein uS19 (Limosilactobacillus reuteri (strain DSM 20016) (Lactobacillus reuteri)).